The chain runs to 296 residues: Protein FAM221A (296 aa).

The tract at residues 235–263 is disordered; sequence MQPPSTSSPQPLAVGPSTQISSLRKPEED. Positions 237–256 are enriched in polar residues; sequence PPSTSSPQPLAVGPSTQISS.

This sequence belongs to the FAM221 family.

The sequence is that of Protein FAM221A (Fam221a) from Rattus norvegicus (Rat).